A 506-amino-acid polypeptide reads, in one-letter code: Protoheme IX farnesyltransferase, mitochondrial (506 aa).

The transit peptide at 1 to 42 (MILRSSLGRLGVARESPLCLQCLNRSRPSFPAVNKLASISRL) directs the protein to the mitochondrion. Residues 45–61 (TVAGQSPSSSVNKTYFS) show a composition bias toward polar residues. The interval 45 to 131 (TVAGQSPSSS…AEPVIPPDAS (87 aa)) is disordered. The segment covering 73–88 (PSLFTSLSPSNSPSQL) has biased composition (low complexity). The span at 89–100 (NRGHSTPSTSPE) shows a compositional bias: polar residues. Transmembrane regions (helical) follow at residues 163–183 (FLVL…SILA), 199–221 (LTFL…LNMI), 247–267 (AAVF…YFGT), 269–289 (PTVT…YTPL), 297–317 (TWIG…AAAG), 337–357 (LGGW…FNAL), 390–410 (VLMF…HGFL), and 439–459 (GLFW…LVTK).

It belongs to the UbiA prenyltransferase family.

It is found in the mitochondrion membrane. The catalysed reaction is heme b + (2E,6E)-farnesyl diphosphate + H2O = Fe(II)-heme o + diphosphate. Converts protoheme IX and farnesyl diphosphate to heme O. The protein is Protoheme IX farnesyltransferase, mitochondrial (cox10) of Emericella nidulans (strain FGSC A4 / ATCC 38163 / CBS 112.46 / NRRL 194 / M139) (Aspergillus nidulans).